A 178-amino-acid polypeptide reads, in one-letter code: Small ribosomal subunit protein uS5 (178 aa).

The region spanning 15-78 (FEEKIIEIRR…ADAKKNVIEV (64 aa)) is the S5 DRBM domain.

This sequence belongs to the universal ribosomal protein uS5 family. As to quaternary structure, part of the 30S ribosomal subunit. Contacts proteins S4 and S8.

Functionally, with S4 and S12 plays an important role in translational accuracy. In terms of biological role, located at the back of the 30S subunit body where it stabilizes the conformation of the head with respect to the body. The polypeptide is Small ribosomal subunit protein uS5 (Thermotoga neapolitana (strain ATCC 49049 / DSM 4359 / NBRC 107923 / NS-E)).